The following is a 297-amino-acid chain: tRNA (guanine-N(7)-)-methyltransferase (297 aa).

S-adenosyl-L-methionine is bound by residues Glu22, Glu47, Asp74, and Asp97. Asp97 is a catalytic residue. Substrate-binding positions include Lys101, Asp133, and 165 to 168 (TKYE).

The protein belongs to the class I-like SAM-binding methyltransferase superfamily. TrmB family.

The enzyme catalyses guanosine(46) in tRNA + S-adenosyl-L-methionine = N(7)-methylguanosine(46) in tRNA + S-adenosyl-L-homocysteine. Its pathway is tRNA modification; N(7)-methylguanine-tRNA biosynthesis. In terms of biological role, catalyzes the formation of N(7)-methylguanine at position 46 (m7G46) in tRNA. This chain is tRNA (guanine-N(7)-)-methyltransferase, found in Aquifex aeolicus (strain VF5).